A 201-amino-acid chain; its full sequence is UPF0301 protein Bpet0561 (201 aa).

The protein belongs to the UPF0301 (AlgH) family.

The polypeptide is UPF0301 protein Bpet0561 (Bordetella petrii (strain ATCC BAA-461 / DSM 12804 / CCUG 43448)).